Reading from the N-terminus, the 184-residue chain is Adenylate kinase 2 (184 aa).

10 to 15 contacts ATP; sequence GSGKST. The segment at 30–59 is NMP; it reads STGEILREAISHLSELGRHAQPYMIKGELV. AMP is bound by residues threonine 31, arginine 36, 57-59, 85-88, and glutamine 92; these read ELV and GYPR. Residues 126 to 132 are LID; it reads GRSLPDD. Position 127 (arginine 127) interacts with ATP. Arginine 140 is an AMP binding site. Position 168 (glutamine 168) interacts with ATP.

The protein belongs to the adenylate kinase family. Monomer.

The protein resides in the cytoplasm. It catalyses the reaction AMP + ATP = 2 ADP. It participates in purine metabolism; AMP biosynthesis via salvage pathway; AMP from ADP: step 1/1. Functionally, catalyzes the reversible transfer of the terminal phosphate group between ATP and AMP. Plays an important role in cellular energy homeostasis and in adenine nucleotide metabolism. This is Adenylate kinase 2 from Nostoc sp. (strain PCC 7120 / SAG 25.82 / UTEX 2576).